The primary structure comprises 558 residues: MEIILFLTMMVMITYVFSGYLYRVALVQSSRVDLIFTRFENMCFKIIGTDLEHMSAKTYVKHFLAFNGFMGFITFVLLIVQQWLFLNPNHNLNQSIDLAFNTAISFLTNSNLQHYNGESDVTYLTQMIVMTYLMFTSSASGYAVCIAMLRRLTGLTNIIGNFYQDIVRFIVRVLLPLSCLISILLMTQGVPQTLHANLMIRTLSGHIQHIAFGPIASLESIKHLGTNGGGFLAGNSATPFENPNIWSNFIEMGSMMLLPMSMLFLFGRMLSRHGKRVHRHALILFVAMFFIFIAILTLTMWSEYRGNPILANLGIYGPNMEGKEVRFGAGLSALFTVITTAFTTGSVNNMHDSLTPIGGLGPMVLMMLNVVFGGEGVGLMNLLIFVLLTVFICSLMVGKTPEYLNMPIGAREMKCIVLVFLIHPILILVFSALAFMIPGASESITNPSFHGISQVMYEMTSAAANNGSGFEGLKDDTTFWNISTGIIMLLSRYIPIILQLMIASSLVNKKSYHQDKYTIAIDKPYFGVSLIVFIVLLSGLTFIPVLLLGPIGEFLTLK.

12 helical membrane passes run 1–21 (MEIILFLTMMVMITYVFSGYL), 66–86 (FNGFMGFITFVLLIVQQWLFL), 127–147 (MIVMTYLMFTSSASGYAVCIA), 166–186 (IVRFIVRVLLPLSCLISILLM), 245–265 (IWSNFIEMGSMMLLPMSMLFL), 281–301 (ALILFVAMFFIFIAILTLTMW), 327–347 (FGAGLSALFTVITTAFTTGSV), 354–374 (LTPIGGLGPMVLMMLNVVFGG), 377–397 (VGLMNLLIFVLLTVFICSLMV), 416–436 (IVLVFLIHPILILVFSALAFM), 482–502 (ISTGIIMLLSRYIPIILQLMI), and 531–551 (IVFIVLLSGLTFIPVLLLGPI).

This sequence belongs to the KdpA family. The system is composed of three essential subunits: KdpA, KdpB and KdpC.

The protein localises to the cell membrane. Functionally, part of the high-affinity ATP-driven potassium transport (or Kdp) system, which catalyzes the hydrolysis of ATP coupled with the electrogenic transport of potassium into the cytoplasm. This subunit binds the extracellular potassium ions and delivers the ions to the membrane domain of KdpB through an intramembrane tunnel. In Staphylococcus aureus (strain USA300), this protein is Potassium-transporting ATPase potassium-binding subunit.